The primary structure comprises 82 residues: DNA gyrase inhibitor YacG (82 aa).

The Zn(2+) site is built by Cys-9, Cys-12, Cys-27, and Cys-31. The segment at 44–82 (IGLPHEGDPGDAPVEYLDDRDLTQPSPERQNESFHRYSE) is disordered. Basic and acidic residues predominate over residues 72–82 (RQNESFHRYSE).

It belongs to the DNA gyrase inhibitor YacG family. As to quaternary structure, interacts with GyrB. Zn(2+) serves as cofactor.

Inhibits all the catalytic activities of DNA gyrase by preventing its interaction with DNA. Acts by binding directly to the C-terminal domain of GyrB, which probably disrupts DNA binding by the gyrase. The chain is DNA gyrase inhibitor YacG from Rhodopirellula baltica (strain DSM 10527 / NCIMB 13988 / SH1).